The following is a 466-amino-acid chain: Flagellum-specific ATP synthase (466 aa).

194 to 201 (SSSGLGKS) lines the ATP pocket.

This sequence belongs to the ATPase alpha/beta chains family.

The protein localises to the cytoplasm. It catalyses the reaction ATP + H2O + 4 H(+)(in) = ADP + phosphate + 5 H(+)(out). In terms of biological role, probable catalytic subunit of a protein translocase for flagellum-specific export, or a proton translocase involved in local circuits at the flagellum. May be involved in a specialized protein export pathway that proceeds without signal peptide cleavage. In Buchnera aphidicola subsp. Schizaphis graminum (strain Sg), this protein is Flagellum-specific ATP synthase (fliI).